We begin with the raw amino-acid sequence, 215 residues long: Ribulose-phosphate 3-epimerase (215 aa).

S13 lines the substrate pocket. A divalent metal cation-binding residues include H38, D40, H69, and D175. The active-site Proton acceptor is D40. Residues H69, D175 to G177, and G196 to S197 contribute to the substrate site. D175 functions as the Proton donor in the catalytic mechanism.

This sequence belongs to the ribulose-phosphate 3-epimerase family. It depends on a divalent metal cation as a cofactor.

It catalyses the reaction D-ribulose 5-phosphate = D-xylulose 5-phosphate. Its pathway is carbohydrate degradation. Catalyzes the reversible epimerization of D-ribulose 5-phosphate to D-xylulose 5-phosphate. The chain is Ribulose-phosphate 3-epimerase from Mycoplasma pneumoniae (strain ATCC 29342 / M129 / Subtype 1) (Mycoplasmoides pneumoniae).